A 727-amino-acid chain; its full sequence is Elongation factor 2 (727 aa).

Residues 19-260 (DQIRNMGICA…MAIKHLPNPL (242 aa)) enclose the tr-type G domain. GTP is bound by residues 28–35 (AHIDHGKT), 94–98 (DTPGH), and 148–151 (NKVD). H603 bears the Diphthamide mark.

Belongs to the TRAFAC class translation factor GTPase superfamily. Classic translation factor GTPase family. EF-G/EF-2 subfamily.

It is found in the cytoplasm. In terms of biological role, catalyzes the GTP-dependent ribosomal translocation step during translation elongation. During this step, the ribosome changes from the pre-translocational (PRE) to the post-translocational (POST) state as the newly formed A-site-bound peptidyl-tRNA and P-site-bound deacylated tRNA move to the P and E sites, respectively. Catalyzes the coordinated movement of the two tRNA molecules, the mRNA and conformational changes in the ribosome. The polypeptide is Elongation factor 2 (Methanococcus maripaludis (strain C7 / ATCC BAA-1331)).